Reading from the N-terminus, the 399-residue chain is Developmentally-regulated G-protein 2 (399 aa).

An OBG-type G domain is found at Gly63–Gly288. GTP contacts are provided by residues Gly69–Ser76, Asp115–Ile119, and Asn246–Asp249. The TGS domain maps to Gly288–Lys366. The interval Glu372 to Gln399 is disordered. The span at Ile388–Gln399 shows a compositional bias: basic and acidic residues.

This sequence belongs to the TRAFAC class OBG-HflX-like GTPase superfamily. OBG GTPase family.

The protein resides in the cytoplasm. Functionally, binds GDP and GTP, and has low GTPase activity. The protein is Developmentally-regulated G-protein 2 (DRG2) of Arabidopsis thaliana (Mouse-ear cress).